An 887-amino-acid chain; its full sequence is Tubulin polyglutamylase TTLL7 (887 aa).

Residues 1-21 (MPSLPQEGVIQGPSPLDLNTE) form a disordered region. The region spanning 38-390 (KGTITANVAG…RTSDKRRNLA (353 aa)) is the TTL domain. Residues Lys-160, 166 to 167 (MG), 188 to 191 (QEYI), and 201 to 203 (KFD) each bind ATP. Arg-227 contacts L-glutamate. 249 to 250 (TN) is a binding site for ATP. Positions 251, 252, and 271 each coordinate L-glutamate. Positions 336, 349, and 351 each coordinate Mg(2+). Lys-367 contacts L-glutamate. The segment at 388 to 450 (NLAKQKAEAQ…ISREEHENRH (63 aa)) is c-MTBD region. Disordered regions lie at residues 519–621 (MGKT…TRPF) and 651–676 (LPHS…TKEQ). A compositionally biased stretch (low complexity) spans 548-560 (SSDSSYDSSSSSS). Composition is skewed to polar residues over residues 593–621 (QQPS…TRPF) and 656–670 (DACS…SLRQ).

The protein belongs to the tubulin--tyrosine ligase family. As to quaternary structure, interacts with both alpha- and beta-tubulin (via C-terminal tubulin tails). It depends on Mg(2+) as a cofactor. Highly expressed in the nervous system including spinal cord, thalamus, hippocampus, hypothalamus and cerebellum.

Its subcellular location is the cell projection. The protein resides in the cilium. The protein localises to the cytoplasm. It is found in the cytoskeleton. It localises to the cilium basal body. Its subcellular location is the dendrite. The protein resides in the perikaryon. It carries out the reaction L-glutamyl-[protein] + L-glutamate + ATP = gamma-L-glutamyl-L-glutamyl-[protein] + ADP + phosphate + H(+). The catalysed reaction is (L-glutamyl)(n)-gamma-L-glutamyl-L-glutamyl-[protein] + L-glutamate + ATP = (L-glutamyl)(n+1)-gamma-L-glutamyl-L-glutamyl-[protein] + ADP + phosphate + H(+). Functionally, polyglutamylase which modifies tubulin, generating polyglutamate side chains of variable lengths on the gamma-carboxyl group of specific glutamate residues within the C-terminal tail of tubulin. Mediates both ATP-dependent initiation and elongation steps of the polyglutamylation reaction. Preferentially modifies the beta-tubulin tail over an alpha-tail. Competes with monoglycylase TTLL3 for modification site on beta-tubulin substrate, thereby creating an anticorrelation between glycylation and glutamylation reactions. Required for neurite growth; responsible for the strong increase in tubulin polyglutamylation during postnatal neuronal maturation. The chain is Tubulin polyglutamylase TTLL7 from Homo sapiens (Human).